Here is a 344-residue protein sequence, read N- to C-terminus: Thiamine thiazole synthase (344 aa).

Residues Cys-90, 111 to 112 (EA), Gly-119, and Val-184 contribute to the substrate site. Cys-232 bears the 2,3-didehydroalanine (Cys) mark. Residues Asp-234, His-249, Met-301, and 311–313 (RMG) each bind substrate.

The protein belongs to the THI4 family. In terms of assembly, homooctamer. Interacts with cyp-41. Fe cation is required as a cofactor. Post-translationally, during the catalytic reaction, a sulfide is transferred from Cys-232 to a reaction intermediate, generating a dehydroalanine residue.

It localises to the cytoplasm. The protein localises to the nucleus. It catalyses the reaction [ADP-thiazole synthase]-L-cysteine + glycine + NAD(+) = [ADP-thiazole synthase]-dehydroalanine + ADP-5-ethyl-4-methylthiazole-2-carboxylate + nicotinamide + 3 H2O + 2 H(+). In terms of biological role, involved in biosynthesis of the thiamine precursor thiazole. Catalyzes the conversion of NAD and glycine to adenosine diphosphate 5-(2-hydroxyethyl)-4-methylthiazole-2-carboxylic acid (ADT), an adenylated thiazole intermediate. The reaction includes an iron-dependent sulfide transfer from a conserved cysteine residue of the protein to a thiazole intermediate. The enzyme can only undergo a single turnover, which suggests it is a suicide enzyme. May have additional roles in adaptation to various stress conditions and in DNA damage tolerance. In Neurospora crassa (strain ATCC 24698 / 74-OR23-1A / CBS 708.71 / DSM 1257 / FGSC 987), this protein is Thiamine thiazole synthase.